The chain runs to 167 residues: Small ribosomal subunit protein uS5 (167 aa).

In terms of domain architecture, S5 DRBM spans 19-82 (LTEKVLHINR…EAARKNMISC (64 aa)).

The protein belongs to the universal ribosomal protein uS5 family. In terms of assembly, part of the 30S ribosomal subunit. Contacts proteins S4 and S8.

With S4 and S12 plays an important role in translational accuracy. Its function is as follows. Located at the back of the 30S subunit body where it stabilizes the conformation of the head with respect to the body. The polypeptide is Small ribosomal subunit protein uS5 (Protochlamydia amoebophila (strain UWE25)).